The chain runs to 229 residues: Type-5 uracil-DNA glycosylase (229 aa).

[4Fe-4S] cluster is bound by residues cysteine 19, cysteine 22, cysteine 123, and cysteine 138.

Belongs to the uracil-DNA glycosylase (UDG) superfamily. Type 5 (UDGb) family.

In terms of biological role, DNA glycosylase with broad substrate specificity. The sequence is that of Type-5 uracil-DNA glycosylase from Mycobacterium leprae (strain TN).